The following is a 62-amino-acid chain: Cecropin-D (62 aa).

An N-terminal signal peptide occupies residues 1–22 (MNFTKILFFVVACVFAMRTVSA). A propeptide spans 23–24 (AP) (removed by a dipeptidylpeptidase). Lysine 60 carries the post-translational modification Lysine amide.

This sequence belongs to the cecropin family.

It localises to the secreted. Cecropins have lytic and antibacterial activity against several Gram-positive and Gram-negative bacteria. The sequence is that of Cecropin-D from Hyalophora cecropia (Cecropia moth).